Here is a 561-residue protein sequence, read N- to C-terminus: Liver carboxylesterase B-1 (561 aa).

A signal peptide spans 1 to 18 (MCLRSLFLVSLATCVVCG). Asn79 carries an N-linked (GlcNAc...) asparagine glycan. A disulfide bridge connects residues Cys87 and Cys116. Ser221 (acyl-ester intermediate) is an active-site residue. An intrachain disulfide couples Cys273 to Cys284. Catalysis depends on charge relay system residues Glu353 and His466. Residues 558-561 (HNEL) carry the Prevents secretion from ER motif.

Belongs to the type-B carboxylesterase/lipase family. In terms of assembly, monomer.

The protein localises to the endoplasmic reticulum lumen. It carries out the reaction a carboxylic ester + H2O = an alcohol + a carboxylate + H(+). Involved in the detoxification of xenobiotics and in the activation of ester and amide prodrugs. This chain is Liver carboxylesterase B-1, found in Rattus norvegicus (Rat).